The chain runs to 195 residues: 3-isopropylmalate dehydratase small subunit (195 aa).

The protein belongs to the LeuD family. LeuD type 1 subfamily. In terms of assembly, heterodimer of LeuC and LeuD.

The catalysed reaction is (2R,3S)-3-isopropylmalate = (2S)-2-isopropylmalate. Its pathway is amino-acid biosynthesis; L-leucine biosynthesis; L-leucine from 3-methyl-2-oxobutanoate: step 2/4. In terms of biological role, catalyzes the isomerization between 2-isopropylmalate and 3-isopropylmalate, via the formation of 2-isopropylmaleate. This Frankia casuarinae (strain DSM 45818 / CECT 9043 / HFP020203 / CcI3) protein is 3-isopropylmalate dehydratase small subunit.